Reading from the N-terminus, the 303-residue chain is Putative fimbrium subunit Fim1C (303 aa).

A signal peptide spans 1–22 (MKKQALICALLATVLLPGCSED).

The protein belongs to the bacteroidetes fimbrillin superfamily. Mfa-like family. As to quaternary structure, may be part of the fimbrial tip.

It is found in the fimbrium. Putative component of the fimbrium tip. Fimbriae are filamentous appendages on the cell surface that mediate cell adhesion and biofilm formation. This is Putative fimbrium subunit Fim1C (fim1C) from Bacteroides uniformis (strain ATCC 8492 / DSM 6597 / CCUG 4942 / CIP 103695 / JCM 5828 / KCTC 5204 / NCTC 13054 / VPI 0061).